Here is a 124-residue protein sequence, read N- to C-terminus: Small ribosomal subunit protein uS12 (124 aa).

At aspartate 89 the chain carries 3-methylthioaspartic acid.

Belongs to the universal ribosomal protein uS12 family. Part of the 30S ribosomal subunit. Contacts proteins S8 and S17. May interact with IF1 in the 30S initiation complex.

In terms of biological role, with S4 and S5 plays an important role in translational accuracy. Interacts with and stabilizes bases of the 16S rRNA that are involved in tRNA selection in the A site and with the mRNA backbone. Located at the interface of the 30S and 50S subunits, it traverses the body of the 30S subunit contacting proteins on the other side and probably holding the rRNA structure together. The combined cluster of proteins S8, S12 and S17 appears to hold together the shoulder and platform of the 30S subunit. The chain is Small ribosomal subunit protein uS12 from Blochmanniella floridana.